The following is a 308-amino-acid chain: UDP-N-acetylenolpyruvoylglucosamine reductase (308 aa).

In terms of domain architecture, FAD-binding PCMH-type spans 22–185 (RVGGPADWLF…TEATFRAEAG (164 aa)). R165 is a catalytic residue. Positions 197-211 (QIARRDSSQPTKERS) are enriched in basic and acidic residues. The interval 197-228 (QIARRDSSQPTKERSAGSTFRNPAGFSSTGRA) is disordered. Over residues 212 to 226 (AGSTFRNPAGFSSTG) the composition is skewed to polar residues. The active-site Proton donor is S214. Residue E296 is part of the active site.

Belongs to the MurB family. FAD is required as a cofactor.

Its subcellular location is the cytoplasm. It carries out the reaction UDP-N-acetyl-alpha-D-muramate + NADP(+) = UDP-N-acetyl-3-O-(1-carboxyvinyl)-alpha-D-glucosamine + NADPH + H(+). Its pathway is cell wall biogenesis; peptidoglycan biosynthesis. Functionally, cell wall formation. In Cereibacter sphaeroides (strain ATCC 17029 / ATH 2.4.9) (Rhodobacter sphaeroides), this protein is UDP-N-acetylenolpyruvoylglucosamine reductase.